A 332-amino-acid polypeptide reads, in one-letter code: GTP 3',8-cyclase (332 aa).

Residues 7-221 (SYDRLHDYVR…FDTCKDNGLA (215 aa)) enclose the Radical SAM core domain. Arg-16 serves as a coordination point for GTP. Residues Cys-23 and Cys-27 each contribute to the [4Fe-4S] cluster site. Tyr-29 provides a ligand contact to S-adenosyl-L-methionine. A [4Fe-4S] cluster-binding site is contributed by Cys-30. Arg-66 is a binding site for GTP. Gly-70 is an S-adenosyl-L-methionine binding site. GTP is bound at residue Thr-97. Ser-121 provides a ligand contact to S-adenosyl-L-methionine. Lys-158 contacts GTP. Met-192 is an S-adenosyl-L-methionine binding site. Positions 256 and 259 each coordinate [4Fe-4S] cluster. 261 to 263 (RLR) contributes to the GTP binding site. Cys-273 is a [4Fe-4S] cluster binding site.

It belongs to the radical SAM superfamily. MoaA family. Monomer and homodimer. It depends on [4Fe-4S] cluster as a cofactor.

It catalyses the reaction GTP + AH2 + S-adenosyl-L-methionine = (8S)-3',8-cyclo-7,8-dihydroguanosine 5'-triphosphate + 5'-deoxyadenosine + L-methionine + A + H(+). It functions in the pathway cofactor biosynthesis; molybdopterin biosynthesis. In terms of biological role, catalyzes the cyclization of GTP to (8S)-3',8-cyclo-7,8-dihydroguanosine 5'-triphosphate. The protein is GTP 3',8-cyclase of Lactiplantibacillus plantarum (strain ATCC BAA-793 / NCIMB 8826 / WCFS1) (Lactobacillus plantarum).